The chain runs to 701 residues: Ephexin-1 (701 aa).

Basic and acidic residues-rich tracts occupy residues 1-11 (METKNSEDQGK) and 26-48 (GPAEMRPELPPETAKETQNEEPR). The tract at residues 1–141 (METKNSEDQG…TPEECPALTD (141 aa)) is disordered. Residues 1-264 (METKNSEDQG…LDILQPEETK (264 aa)) form a regulatory region; modulates activity toward RHOA, RAC1 and CDC42 region. A compositionally biased stretch (polar residues) spans 120–132 (ASESSSTPGNGTT). At Y172 the chain carries Phosphotyrosine. The segment at 187-226 (RRQQDAEIQGNSDGSQAGEDNAEEEEEEEEEPASPPERRA) is disordered. Residues 206 to 218 (DNAEEEEEEEEEP) show a composition bias toward acidic residues. Residues 264–448 (KLQEAMFELV…EMVVKACNEG (185 aa)) enclose the DH domain. One can recognise a PH domain in the interval 480–592 (WLLKQGELQQ…WMTSLAPNRR (113 aa)). Positions 603–664 (LDCPQVQCVH…PSSMTEEILN (62 aa)) constitute an SH3 domain. Basic and acidic residues predominate over residues 679 to 690 (HKMEDPQRSQNK). The disordered stretch occupies residues 679–701 (HKMEDPQRSQNKDRRKLGSRNRQ). The span at 691 to 701 (DRRKLGSRNRQ) shows a compositional bias: basic residues.

As to quaternary structure, interacts with CDK5R1 and EPHA4; activated by EPHA4 through the CDK5 kinase. Post-translationally, phosphorylation by CDK5 upon EPHA4 activation by EFNA1 may regulate dendritic spine morphogenesis. Src-dependent phosphorylation at Tyr-172 upon EPHA4 activation increases the guanine exchange factor activity toward RHOA. Expressed in telencephalic neurons (at protein level). Expressed in brain, spinal cord and testis.

Its subcellular location is the cytoplasm. It localises to the membrane. The protein localises to the cell projection. The protein resides in the growth cone. In terms of biological role, acts as a guanine nucleotide exchange factor (GEF) which differentially activates the GTPases RHOA, RAC1 and CDC42. Plays a role in axon guidance regulating ephrin-induced growth cone collapse and dendritic spine morphogenesis. Upon activation by ephrin through EPHA4, the GEF activity switches toward RHOA resulting in its activation. Activated RHOA promotes cone retraction at the expense of RAC1- and CDC42-stimulated growth cone extension. This chain is Ephexin-1 (Ngef), found in Rattus norvegicus (Rat).